Reading from the N-terminus, the 295-residue chain is G1/S-specific cyclin-D1 (295 aa).

In terms of domain architecture, Cyclin N-terminal spans 28-152 (LRAMLKAEET…VLVNKLKWNL (125 aa)). The segment at 264–295 (QQNLDPKAAEEEEEEEEVDLACTPTDVRDVNI) is disordered. Residue lysine 270 forms a Glycyl lysine isopeptide (Lys-Gly) (interchain with G-Cter in ubiquitin) linkage. Residues 273-282 (EEEEEEEEVD) show a composition bias toward acidic residues. Threonine 286 bears the Phosphothreonine mark.

It belongs to the cyclin family. Cyclin D subfamily. Interacts with either CDK4 or CDK6 protein kinase to form a serine/threonine kinase holoenzyme complex. The cyclin subunit imparts substrate specificity to the complex. Component of the ternary complex CCND1/CDK4/CDKN1B required for nuclear translocation and modulation of CDK4-mediated kinase activity. Interacts directly with CDKN1B. Can form similar complexes with either CDKN1A or CDKN2A. Interacts with UHRF2; the interaction ubiquitinates CCND1 and appears to occur independently of phosphorylation. Interacts with USP2. Interacts (via cyclin N-terminal domain) with INSM1 (via N-terminal region); the interaction competes with the binding of CCND1 to CDK4 during cell cycle progression and inhibits CDK4 activity. Interacts with CDK4; the interaction is prevented with the binding of CCND1 to INSM1 during cell cycle progression. In terms of processing, phosphorylation at Thr-286 by MAP kinases is required for ubiquitination and degradation by the DCX(AMBRA1) complex. It also plays an essential role for recognition by the FBXO31 component of SCF (SKP1-cullin-F-box) protein ligase complex following DNA damage. Post-translationally, ubiquitinated at Lys-270 by the DCX(AMBRA1) complex during the transition from G1 to S cell phase, leading to its degradation: ubiquitination is dependent on Thr-286 phosphorylation. The DCX(AMBRA1) complex represents the major regulator of CCND1 stability during the G1/S transition. Also ubiquitinated by the SCF(FBXO4) and Cul7-RING(FBXW8) ubiquitin-protein ligase complexes. Following DNA damage it is ubiquitinated by the SCF(FBXO31) protein ligase complex. SCF(FBXO31) ubiquitination is dependent on Thr-286 phosphorylation. Ubiquitinated also by UHRF2 apparently in a phosphorylation-independent manner. Ubiquitination leads to its degradation and G1 arrest. Deubiquitinated by USP2; leading to its stabilization.

It localises to the nucleus. The protein localises to the cytoplasm. It is found in the nucleus membrane. Functionally, regulatory component of the cyclin D1-CDK4 (DC) complex that phosphorylates and inhibits members of the retinoblastoma (RB) protein family including RB1 and regulates the cell-cycle during G(1)/S transition. Phosphorylation of RB1 allows dissociation of the transcription factor E2F from the RB/E2F complex and the subsequent transcription of E2F target genes which are responsible for the progression through the G(1) phase. Hypophosphorylates RB1 in early G(1) phase. Cyclin D-CDK4 complexes are major integrators of various mitogenenic and antimitogenic signals. Also a substrate for SMAD3, phosphorylating SMAD3 in a cell-cycle-dependent manner and repressing its transcriptional activity. Component of the ternary complex, cyclin D1/CDK4/CDKN1B, required for nuclear translocation and activity of the cyclin D-CDK4 complex. Exhibits transcriptional corepressor activity with INSM1 on the NEUROD1 and INS promoters in a cell cycle-independent manner. In Bos taurus (Bovine), this protein is G1/S-specific cyclin-D1 (CCND1).